Here is a 362-residue protein sequence, read N- to C-terminus: Biotin synthase (362 aa).

One can recognise a Radical SAM core domain in the interval asparagine 46–arginine 273. Positions 61, 65, and 68 each coordinate [4Fe-4S] cluster. Residues cysteine 105, cysteine 136, cysteine 196, and arginine 268 each contribute to the [2Fe-2S] cluster site. The disordered stretch occupies residues proline 320 to valine 339.

This sequence belongs to the radical SAM superfamily. Biotin synthase family. In terms of assembly, homodimer. The cofactor is [4Fe-4S] cluster. [2Fe-2S] cluster serves as cofactor.

The catalysed reaction is (4R,5S)-dethiobiotin + (sulfur carrier)-SH + 2 reduced [2Fe-2S]-[ferredoxin] + 2 S-adenosyl-L-methionine = (sulfur carrier)-H + biotin + 2 5'-deoxyadenosine + 2 L-methionine + 2 oxidized [2Fe-2S]-[ferredoxin]. Its pathway is cofactor biosynthesis; biotin biosynthesis; biotin from 7,8-diaminononanoate: step 2/2. Catalyzes the conversion of dethiobiotin (DTB) to biotin by the insertion of a sulfur atom into dethiobiotin via a radical-based mechanism. The chain is Biotin synthase from Aeromonas hydrophila subsp. hydrophila (strain ATCC 7966 / DSM 30187 / BCRC 13018 / CCUG 14551 / JCM 1027 / KCTC 2358 / NCIMB 9240 / NCTC 8049).